We begin with the raw amino-acid sequence, 555 residues long: Inorganic phosphate transporter 1-11 (555 aa).

Topologically, residues 1–28 (MADADGGSNLAVLDALDSARTQMYHMKA) are cytoplasmic. The chain crosses the membrane as a helical span at residues 29–49 (IVIAGMGFFTDAYDLFCISTV). Over 50–77 (SKLLGRLYYQPDGSTDSKPGALSKTANN) the chain is Extracellular. Residues 78 to 98 (MVIGVALVGTLMGQLVFGYFG) form a helical membrane-spanning segment. Topologically, residues 99-105 (DKLGRKR) are cytoplasmic. The helical transmembrane segment at 106–126 (VYGVTLILMAACAIGSGLSFG) threads the bilayer. Over 127 to 130 (SSRK) the chain is Extracellular. Residues 131 to 151 (AVIGTLCFFRFWLGFGIGGDY) traverse the membrane as a helical segment. The Cytoplasmic portion of the chain corresponds to 152-167 (PLSATIMSEYSNKKTR). Residues 168–188 (GAFIAAVFAMQGVGIIFAGLV) traverse the membrane as a helical segment. Residues 189-216 (SMIVSSIFLTYNKAPSYKGNHDLSRQMP) are Extracellular-facing. Residues 217 to 237 (AADYVWRIVLMIGAFPALATF) traverse the membrane as a helical segment. Topologically, residues 238 to 298 (YWRMKMPETA…PLLSMEFARR (61 aa)) are cytoplasmic. A helical transmembrane segment spans residues 299-319 (HGLHLIGTTTTWFLLDIAFYS). Residues 320-351 (QNLTQKDIFPAMGLISGAAEVNALTEMFQISK) are Extracellular-facing. The helical transmembrane segment at 352–372 (ASFLVALLGTFPGYWVTVALI) threads the bilayer. The Cytoplasmic portion of the chain corresponds to 373–377 (DKMGR). The helical transmembrane segment at 378 to 398 (YMIQLIGFFMMSMFMLAMGIL) threads the bilayer. Topologically, residues 399–408 (YDYLKTHHFL) are extracellular. A helical membrane pass occupies residues 409 to 436 (FGLLYALTFFFANFGPNSTTFVLPAELF). Topologically, residues 437 to 442 (PTRVRS) are cytoplasmic. Residues 443–463 (TCHAISAAAGKAGAIVAAFGI) traverse the membrane as a helical segment. Residues 464–477 (QKLTYNSQVKSIKK) are Extracellular-facing. Residues 478–498 (ALIILSITNMLGFFFTFLVPE) form a helical membrane-spanning segment. The Cytoplasmic portion of the chain corresponds to 499–555 (TMGRSLEEISGEDGNTGAGGGGAPAAANAGVGVSASDVSRDEKFPASSTEWQTSMHA). Positions 506–555 (EISGEDGNTGAGGGGAPAAANAGVGVSASDVSRDEKFPASSTEWQTSMHA) are disordered. Residues 512-521 (GNTGAGGGGA) are compositionally biased toward gly residues. Low complexity predominate over residues 522–535 (PAAANAGVGVSASD). Over residues 544-555 (ASSTEWQTSMHA) the composition is skewed to polar residues.

The protein belongs to the major facilitator superfamily. Phosphate:H(+) symporter (TC 2.A.1.9) family.

The protein resides in the membrane. Functionally, symbiosis-specific regulated inorganic phosphate (Pi) transporter. Probably involved in symbiosis-mediated Pi uptake in roots colonized by myccorhizal fungi. This Oryza sativa subsp. japonica (Rice) protein is Inorganic phosphate transporter 1-11 (PHT1-11).